We begin with the raw amino-acid sequence, 859 residues long: Rod cGMP-specific 3',5'-cyclic phosphodiesterase subunit alpha (859 aa).

N-acetylglycine is present on Gly-2. GAF domains are found at residues 73–222 (QAEK…NLIM) and 254–431 (DIER…GWSV). Residues 483–816 (EEEELAEILQ…KEWKALADEY (334 aa)) enclose the PDEase domain. The active-site Proton donor is His-559. Positions 563, 599, 600, and 720 each coordinate a divalent metal cation. Residues 821–859 (KGLEEEKQKQQAANQAAAGSQHGGKQPGGGPASKSCCVQ) form a disordered region. Low complexity predominate over residues 830–840 (QQAANQAAAGS). Residues 841-851 (QHGGKQPGGGP) are compositionally biased toward gly residues. Cys-856 is modified (cysteine methyl ester). A lipid anchor (S-farnesyl cysteine) is attached at Cys-856. Positions 857 to 859 (CVQ) are cleaved as a propeptide — removed in mature form.

Belongs to the cyclic nucleotide phosphodiesterase family. In terms of assembly, oligomer composed of two catalytic chains (alpha and beta), an inhibitory chain (gamma) and the delta chain. A divalent metal cation is required as a cofactor.

It localises to the cell membrane. The protein localises to the cell projection. It is found in the cilium. Its subcellular location is the photoreceptor outer segment. It carries out the reaction 3',5'-cyclic GMP + H2O = GMP + H(+). Functionally, rod-specific cGMP phosphodiesterase that catalyzes the hydrolysis of 3',5'-cyclic GMP. This protein participates in processes of transmission and amplification of the visual signal. The protein is Rod cGMP-specific 3',5'-cyclic phosphodiesterase subunit alpha of Bos taurus (Bovine).